Here is a 994-residue protein sequence, read N- to C-terminus: Regulator of telomere elongation helicase 1 homolog (994 aa).

In terms of domain architecture, Helicase ATP-binding spans 15-300 (PKLSVKFPFE…EETARSEADA (286 aa)). Position 50-57 (50-57 (SPTGTGKT)) interacts with ATP. Residues Cys-142, Cys-160, Cys-169, and Cys-208 each contribute to the [4Fe-4S] cluster site. The DEAH box motif lies at 251-254 (DEAH). Residues 876–895 (FKIETPGPSTSTLTQKSEPP) form a disordered region. The segment covering 882-892 (GPSTSTLTQKS) has biased composition (polar residues).

The protein belongs to the helicase family. RAD3/XPD subfamily.

It localises to the nucleus. The enzyme catalyses ATP + H2O = ADP + phosphate + H(+). A probable ATP-dependent DNA helicase implicated in DNA repair and the maintenance of genomic stability. Acts as an anti-recombinase to counteract toxic recombination and limit crossover during meiosis. Regulates meiotic recombination and crossover homeostasis by physically dissociating strand invasion events and thereby promotes noncrossover repair by meiotic synthesis dependent strand annealing (SDSA) as well as disassembly of D loop recombination intermediates. This is Regulator of telomere elongation helicase 1 homolog from Caenorhabditis elegans.